The chain runs to 338 residues: Ferredoxin--NADP reductase (338 aa).

FAD-binding residues include Asp-38, Gln-46, Tyr-51, Val-91, Phe-125, Asp-291, and Thr-331.

This sequence belongs to the ferredoxin--NADP reductase type 2 family. As to quaternary structure, homodimer. The cofactor is FAD.

It catalyses the reaction 2 reduced [2Fe-2S]-[ferredoxin] + NADP(+) + H(+) = 2 oxidized [2Fe-2S]-[ferredoxin] + NADPH. This is Ferredoxin--NADP reductase from Orientia tsutsugamushi (strain Boryong) (Rickettsia tsutsugamushi).